A 638-amino-acid chain; its full sequence is Methyl-accepting chemotaxis protein McpQ (638 aa).

The helical transmembrane segment at 18–38 (LGLGFGLVLLLTLAITLTGWH) threads the bilayer. The region spanning 45 to 282 (DRGDKLGNIS…SQTEVRDAAA (238 aa)) is the HBM domain. Residues 287–307 (TLLTVATVLALALGLLAAWAI) traverse the membrane as a helical segment. The region spanning 309–361 (RQIIIPLRQTLRAAERVASGDLTQSLQVQRRDELGQLQASMHRMTQGLRELIG) is the HAMP domain. The Methyl-accepting transducer domain occupies 366–602 (GVTQIASAAE…EINRSVMNVR (237 aa)).

It belongs to the methyl-accepting chemotaxis (MCP) protein family.

It localises to the cell membrane. Functionally, chemotactic-signal transducers respond to changes in the concentration of attractants and repellents in the environment, transduce a signal from the outside to the inside of the cell, and facilitate sensory adaptation through the variation of the level of methylation. McpQ recognizes specifically citrate and citrate/metal(2+) complexes. Binds citrate/metal(2+) complexes with higher affinity than free citrate, and mediates preferentially chemotaxis toward citrate/metal(2+) complexes. The sequence is that of Methyl-accepting chemotaxis protein McpQ from Pseudomonas putida (strain ATCC 47054 / DSM 6125 / CFBP 8728 / NCIMB 11950 / KT2440).